We begin with the raw amino-acid sequence, 67 residues long: Guanine nucleotide-binding protein G(I)/G(S)/G(O) subunit gamma-13 (67 aa).

Cysteine methyl ester is present on Cys-64. The S-farnesyl cysteine moiety is linked to residue Cys-64. A propeptide spans 65-67 (removed in mature form); that stretch reads TIL.

Belongs to the G protein gamma family. In terms of assembly, g proteins are composed of 3 units, alpha, beta and gamma.

The protein resides in the cell membrane. Guanine nucleotide-binding proteins (G proteins) are involved as a modulator or transducer in various transmembrane signaling systems. The beta and gamma chains are required for the GTPase activity, for replacement of GDP by GTP, and for G protein-effector interaction. This Mus musculus (Mouse) protein is Guanine nucleotide-binding protein G(I)/G(S)/G(O) subunit gamma-13 (Gng13).